A 390-amino-acid chain; its full sequence is Phosphoglycerate kinase (390 aa).

Residues 19–21, Arg34, 57–60, Arg115, and Arg148 contribute to the substrate site; these read DYN and HLGR. Residues Lys198, Gly289, Glu320, and 347 to 350 each bind ATP; that span reads GGDS.

This sequence belongs to the phosphoglycerate kinase family. Monomer.

It is found in the cytoplasm. The enzyme catalyses (2R)-3-phosphoglycerate + ATP = (2R)-3-phospho-glyceroyl phosphate + ADP. It functions in the pathway carbohydrate degradation; glycolysis; pyruvate from D-glyceraldehyde 3-phosphate: step 2/5. This is Phosphoglycerate kinase (pgk) from Thermus thermophilus (strain ATCC 27634 / DSM 579 / HB8).